A 394-amino-acid polypeptide reads, in one-letter code: Putative gustatory receptor 22a (394 aa).

Topologically, residues 1 to 16 (MSQPKRIHRICKGLAR) are cytoplasmic. Residues 17–37 (FTIRATLYGSWVLGLFPFTFD) traverse the membrane as a helical segment. The Extracellular portion of the chain corresponds to 38 to 47 (SRKRRLNRSK). A glycan (N-linked (GlcNAc...) asparagine) is linked at Asn-44. The chain crosses the membrane as a helical span at residues 48–68 (WLLAYGLVLNLTLLVLSMLPS). The Cytoplasmic segment spans residues 69 to 148 (TDDHNSVKVE…HTFNRYVIEK (80 aa)). The helical transmembrane segment at 149-169 (GLVIILEIGSSLVLYFGIPNS) threads the bilayer. Position 170 (Lys-170) is a topological domain, extracellular. A helical membrane pass occupies residues 171–191 (IVVYEAVCIYIVQLEVLMVVM). At 192–256 (HFHLAVIYIY…TAIYDIQVTL (65 aa)) the chain is on the cytoplasmic side. A helical transmembrane segment spans residues 257–277 (FMATLFSVNIIVGHVLVICWI). The N-linked (GlcNAc...) asparagine glycan is linked to Asn-278. Over 278–281 (NITR) the chain is Extracellular. Residues 282–302 (FSLLVIFLLFPQALIINFWDL) traverse the membrane as a helical segment. Residues 303 to 361 (WQGIAFCDLAESTGKKTSMILKLFNDMENMDQETERRVTEFTLFCSHRRLKVCHLGLLD) lie on the Cytoplasmic side of the membrane. A helical membrane pass occupies residues 362-382 (INYEMGFRMIITNILYVVFLV). The Extracellular segment spans residues 383 to 394 (QFDYMNLKFKTD).

The protein belongs to the insect chemoreceptor superfamily. Gustatory receptor (GR) family. Gr22e subfamily. In terms of tissue distribution, expressed in neurons of the terminal external chemosensory organ of larvae.

The protein resides in the cell membrane. Probable gustatory receptor which mediates acceptance or avoidance behavior, depending on its substrates. The polypeptide is Putative gustatory receptor 22a (Gr22a) (Drosophila melanogaster (Fruit fly)).